An 865-amino-acid chain; its full sequence is Protein translocase subunit SecA (865 aa).

Residues Gln85, 103–107 (GEGKT), and Asp505 contribute to the ATP site. 4 residues coordinate Zn(2+): Cys847, Cys849, Cys858, and His859.

The protein belongs to the SecA family. In terms of assembly, monomer and homodimer. Part of the essential Sec protein translocation apparatus which comprises SecA, SecYEG and auxiliary proteins SecDF. Other proteins may also be involved. The cofactor is Zn(2+).

It is found in the cell membrane. Its subcellular location is the cytoplasm. It catalyses the reaction ATP + H2O + cellular proteinSide 1 = ADP + phosphate + cellular proteinSide 2.. In terms of biological role, part of the Sec protein translocase complex. Interacts with the SecYEG preprotein conducting channel. Has a central role in coupling the hydrolysis of ATP to the transfer of proteins into and across the cell membrane, serving as an ATP-driven molecular motor driving the stepwise translocation of polypeptide chains across the membrane. The polypeptide is Protein translocase subunit SecA (Lactococcus lactis subsp. cremoris (strain MG1363)).